The following is a 157-amino-acid chain: Ribonuclease 8 (157 aa).

A signal peptide spans 1–30 (MAPARAGCCPLLLLLLLLLGLWVAEVLVSA). His-45 (proton acceptor) is an active-site residue. 4 disulfide bridges follow: Cys-53/Cys-96, Cys-67/Cys-121, Cys-85/Cys-136, and Cys-92/Cys-99. Substrate-binding positions include 68–72 (KDLNT) and Lys-93. Residue His-152 is the Proton donor of the active site.

Belongs to the pancreatic ribonuclease family.

The protein resides in the secreted. Has a low ribonuclease activity. The chain is Ribonuclease 8 (RNASE8) from Pan troglodytes (Chimpanzee).